A 227-amino-acid chain; its full sequence is ATP-dependent dethiobiotin synthetase BioD (227 aa).

An ATP-binding site is contributed by 13 to 18 (DAGKTT). A Mg(2+)-binding site is contributed by T17. K38 is an active-site residue. ATP is bound by residues D55, 118–121 (EGAG), 178–179 (NR), 207–209 (PYI), and E214. Mg(2+)-binding residues include D55 and E118.

It belongs to the dethiobiotin synthetase family. As to quaternary structure, homodimer. It depends on Mg(2+) as a cofactor.

It is found in the cytoplasm. The catalysed reaction is (7R,8S)-7,8-diammoniononanoate + CO2 + ATP = (4R,5S)-dethiobiotin + ADP + phosphate + 3 H(+). The protein operates within cofactor biosynthesis; biotin biosynthesis; biotin from 7,8-diaminononanoate: step 1/2. Functionally, catalyzes a mechanistically unusual reaction, the ATP-dependent insertion of CO2 between the N7 and N8 nitrogen atoms of 7,8-diaminopelargonic acid (DAPA, also called 7,8-diammoniononanoate) to form a ureido ring. The polypeptide is ATP-dependent dethiobiotin synthetase BioD (Tolumonas auensis (strain DSM 9187 / NBRC 110442 / TA 4)).